We begin with the raw amino-acid sequence, 653 residues long: ATP-dependent zinc metalloprotease FtsH 1 (653 aa).

Residues 1–8 (MAENKWLR) are Cytoplasmic-facing. Residues 9–29 (NGFVWIVLIIAVVALWVTFMK) traverse the membrane as a helical segment. Residues 30 to 110 (DGGSAREENF…RVNPASQWGN (81 aa)) are Extracellular-facing. The chain crosses the membrane as a helical span at residues 111-131 (WLSALTFILPTLFLIGIVIFM). Over 132–653 (MRQAQGTNNQ…SPTMRPQPAS (522 aa)) the chain is Cytoplasmic. 203-210 (GPPGTGKT) contacts ATP. Zn(2+) is bound at residue His425. Glu426 is an active-site residue. Zn(2+) contacts are provided by His429 and Asp501. Residues 604–653 (EPRPRPQLVGPPVTRPAALAHKTEEADRGGERSPHPQPHPSPTMRPQPAS) are disordered. A compositionally biased stretch (basic and acidic residues) spans 624 to 637 (HKTEEADRGGERSP). Positions 638 to 653 (HPQPHPSPTMRPQPAS) are enriched in pro residues.

This sequence in the central section; belongs to the AAA ATPase family. The protein in the C-terminal section; belongs to the peptidase M41 family. In terms of assembly, homohexamer. Zn(2+) serves as cofactor.

It localises to the cell membrane. In terms of biological role, acts as a processive, ATP-dependent zinc metallopeptidase for both cytoplasmic and membrane proteins. Plays a role in the quality control of integral membrane proteins. This is ATP-dependent zinc metalloprotease FtsH 1 from Sphaerobacter thermophilus (strain ATCC 49802 / DSM 20745 / KCCM 41009 / NCIMB 13125 / S 6022).